The sequence spans 267 residues: MPNGTKLAKSFLWKKCDSCNILISKFDFYKHDKVCPECNYHFPMYSSERINHIIDLKSWIPLYNNLLSGDPLGFCDKKPYITRLAENQKITGLDEAVQTGIGRINNISASVAVMDFNFMGGSMGSAVGEKITRLVEFSTKEELPIVIISASGGARMQEGILSLMQMAKISAALERLQSKGLLYISILSSPTTGGVFASFAMLGDIILAEPKAVVGFAGKRVVEQTLNEKLPPNFQSAEYLLDNGFVDLIVKRKQLKKTIHMILDLHN.

A CoA carboxyltransferase N-terminal domain is found at 12–267 (LWKKCDSCNI…TIHMILDLHN (256 aa)). Zn(2+) contacts are provided by cysteine 16, cysteine 19, cysteine 35, and cysteine 38. The C4-type zinc finger occupies 16-38 (CDSCNILISKFDFYKHDKVCPEC).

It belongs to the AccD/PCCB family. As to quaternary structure, acetyl-CoA carboxylase is a heterohexamer composed of biotin carboxyl carrier protein, biotin carboxylase and 2 subunits each of ACCase subunit alpha and ACCase plastid-coded subunit beta (accD). Requires Zn(2+) as cofactor.

It is found in the plastid. Its subcellular location is the chloroplast stroma. The enzyme catalyses N(6)-carboxybiotinyl-L-lysyl-[protein] + acetyl-CoA = N(6)-biotinyl-L-lysyl-[protein] + malonyl-CoA. The protein operates within lipid metabolism; malonyl-CoA biosynthesis; malonyl-CoA from acetyl-CoA: step 1/1. Its function is as follows. Component of the acetyl coenzyme A carboxylase (ACC) complex. Biotin carboxylase (BC) catalyzes the carboxylation of biotin on its carrier protein (BCCP) and then the CO(2) group is transferred by the transcarboxylase to acetyl-CoA to form malonyl-CoA. The polypeptide is Acetyl-coenzyme A carboxylase carboxyl transferase subunit beta, chloroplastic (Cyanidium caldarium (Red alga)).